The chain runs to 304 residues: N-acetyl-D-glucosamine kinase (304 aa).

ATP contacts are provided by residues 4–11 (GFDMGGTK) and 133–140 (GLGGGLVI). Residues histidine 157, cysteine 177, cysteine 179, and cysteine 184 each contribute to the Zn(2+) site.

The protein belongs to the ROK (NagC/XylR) family. NagK subfamily.

The catalysed reaction is N-acetyl-D-glucosamine + ATP = N-acetyl-D-glucosamine 6-phosphate + ADP + H(+). The protein operates within cell wall biogenesis; peptidoglycan recycling. Its function is as follows. Catalyzes the phosphorylation of N-acetyl-D-glucosamine (GlcNAc) derived from cell-wall degradation, yielding GlcNAc-6-P. The sequence is that of N-acetyl-D-glucosamine kinase from Pectobacterium carotovorum subsp. carotovorum (strain PC1).